A 537-amino-acid polypeptide reads, in one-letter code: Exoglucanase 1 (537 aa).

The N-terminal stretch at 1 to 18 (MKGSISYQIYKGALLLSA) is a signal peptide. The segment at 19–453 (LLNSVSAQQV…YVIYSNIKTG (435 aa)) is catalytic. Asn-136 is a glycosylation site (N-linked (GlcNAc...) asparagine). Glu-235 acts as the Nucleophile in catalysis. Catalysis depends on Glu-240, which acts as the Proton donor. N-linked (GlcNAc...) asparagine glycosylation is found at Asn-414 and Asn-456. The tract at residues 454-477 (PLNSTFTGGTTSSSSTTTTTSKST) is linker. Positions 458–502 (TFTGGTTSSSSTTTTTSKSTSTSSSSKTTTTVTTTTTSSGSSGTG) are enriched in low complexity. Residues 458 to 503 (TFTGGTTSSSSTTTTTSKSTSTSSSSKTTTTVTTTTTSSGSSGTGA) are disordered. A CBM1 domain is found at 501–537 (TGARDWAQCGGNGWTGPTTCVSPYTCTKQNDWYSQCL). 2 disulfide bridges follow: Cys-509–Cys-526 and Cys-520–Cys-536.

It belongs to the glycosyl hydrolase 7 (cellulase C) family.

Its subcellular location is the secreted. It catalyses the reaction Hydrolysis of (1-&gt;4)-beta-D-glucosidic linkages in cellulose and cellotetraose, releasing cellobiose from the non-reducing ends of the chains.. The chain is Exoglucanase 1 (cbh1) from Penicillium janthinellum (Penicillium vitale).